We begin with the raw amino-acid sequence, 192 residues long: MNAIWIAVAAVSLLGLAFGAILGYASRRFAVEDDPVVEKIDEILPQSQCGQCGYPGCRPYAEAISCNGEKINRCAPGGEAVMLKIAELLNVEPQPLDGEAPELTPARMVAVIDENNCIGCTKCIQACPVDAIVGATRAMHTVMSDLCTGCNLCVDPCPTHCISLQPVAETPDSWKWDLNTIPVRIIPVEHHA.

The segment at 1-26 (MNAIWIAVAAVSLLGLAFGAILGYAS) is hydrophobic. Residues 32–91 (EDDPVVEKIDEILPQSQCGQCGYPGCRPYAEAISCNGEKINRCAPGGEAVMLKIAELLNV) enclose the 4Fe-4S domain. C49, C52, C57, C74, C117, C120, C123, C127, C147, C150, C153, and C157 together coordinate [4Fe-4S] cluster. 4Fe-4S ferredoxin-type domains lie at 108 to 137 (MVAV…GATR) and 138 to 167 (AMHT…LQPV).

Belongs to the 4Fe4S bacterial-type ferredoxin family. RnfB subfamily. In terms of assembly, the complex is composed of six subunits: RsxA, RsxB, RsxC, RsxD, RsxE and RsxG. [4Fe-4S] cluster serves as cofactor.

It localises to the cell inner membrane. In terms of biological role, part of a membrane-bound complex that couples electron transfer with translocation of ions across the membrane. Required to maintain the reduced state of SoxR. This chain is Ion-translocating oxidoreductase complex subunit B, found in Escherichia coli O127:H6 (strain E2348/69 / EPEC).